The sequence spans 142 residues: Hemoglobin subunit alpha (142 aa).

One can recognise a Globin domain in the interval 2-142 (VLSAADKTNV…VSTVLTSKYR (141 aa)). Phosphoserine is present on Ser4. Position 8 is an N6-succinyllysine (Lys8). Residue Thr9 is modified to Phosphothreonine. Lys12 bears the N6-succinyllysine mark. Lys17 bears the N6-acetyllysine; alternate mark. Lys17 carries the N6-succinyllysine; alternate modification. Position 41 is an N6-succinyllysine (Lys41). Ser50 carries the phosphoserine modification. An O2-binding site is contributed by His59. His88 lines the heme b pocket. A Phosphoserine modification is found at Ser103. Phosphothreonine is present on Thr109. Phosphoserine occurs at positions 125 and 132. A phosphothreonine mark is found at Thr135 and Thr138. The residue at position 139 (Ser139) is a Phosphoserine.

The protein belongs to the globin family. In terms of assembly, heterotetramer of two alpha chains and two beta chains. Red blood cells.

Its function is as follows. Involved in oxygen transport from the lung to the various peripheral tissues. In terms of biological role, hemopressin acts as an antagonist peptide of the cannabinoid receptor CNR1. Hemopressin-binding efficiently blocks cannabinoid receptor CNR1 and subsequent signaling. In Equus przewalskii (Przewalski's horse), this protein is Hemoglobin subunit alpha (HBA).